The chain runs to 393 residues: NAD(P)H-quinone oxidoreductase subunit H, chloroplastic (393 aa).

It belongs to the complex I 49 kDa subunit family. As to quaternary structure, NDH is composed of at least 16 different subunits, 5 of which are encoded in the nucleus.

It is found in the plastid. It localises to the chloroplast thylakoid membrane. It catalyses the reaction a plastoquinone + NADH + (n+1) H(+)(in) = a plastoquinol + NAD(+) + n H(+)(out). The enzyme catalyses a plastoquinone + NADPH + (n+1) H(+)(in) = a plastoquinol + NADP(+) + n H(+)(out). Its function is as follows. NDH shuttles electrons from NAD(P)H:plastoquinone, via FMN and iron-sulfur (Fe-S) centers, to quinones in the photosynthetic chain and possibly in a chloroplast respiratory chain. The immediate electron acceptor for the enzyme in this species is believed to be plastoquinone. Couples the redox reaction to proton translocation, and thus conserves the redox energy in a proton gradient. The sequence is that of NAD(P)H-quinone oxidoreductase subunit H, chloroplastic from Drimys granadensis.